The primary structure comprises 154 residues: Prefoldin subunit 2 (154 aa).

The segment covering 124-139 has biased composition (basic and acidic residues); the sequence is IRLMGEDEKPAAKENS. Positions 124–154 are disordered; the sequence is IRLMGEDEKPAAKENSEGAGAKASSAGVLVS. Low complexity predominate over residues 140-154; sequence EGAGAKASSAGVLVS.

It belongs to the prefoldin subunit beta family. As to quaternary structure, heterohexamer of two PFD-alpha type and four PFD-beta type subunits. Component of the PAQosome complex which is responsible for the biogenesis of several protein complexes and which consists of R2TP complex members RUVBL1, RUVBL2, RPAP3 and PIH1D1, URI complex members PFDN2, PFDN6, PDRG1, UXT and URI1 as well as ASDURF, POLR2E and DNAAF10/WDR92. Interacts with URI1; the interaction is phosphorylation-dependent and occurs in a growth-dependent manner.

The protein localises to the nucleus. Its subcellular location is the cytoplasm. It is found in the mitochondrion. Functionally, binds specifically to cytosolic chaperonin (c-CPN) and transfers target proteins to it. Binds to nascent polypeptide chain and promotes folding in an environment in which there are many competing pathways for nonnative proteins. The chain is Prefoldin subunit 2 (PFDN2) from Homo sapiens (Human).